A 334-amino-acid polypeptide reads, in one-letter code: Serpentine receptor class alpha-11 (334 aa).

The Extracellular segment spans residues 1-23 (MTTNNPVCASDAHMEMYSSKLYT). The chain crosses the membrane as a helical span at residues 24–44 (SALFLNLIIATTSMILTGFAI). Over 45–57 (QKLFMESIINIST) the chain is Cytoplasmic. Residues 58-80 (RMFLFCGLMCCSLHQTAYIVLRI) form a helical membrane-spanning segment. Over 81–105 (QVIYQVFFKLSEPCNLYYPAIDCKY) the chain is Extracellular. The helical transmembrane segment at 106–126 (VTFSLVAGNTGMIFIQSAMTI) threads the bilayer. Over 127–145 (DRIFATIFPKLWPKLKYWP) the chain is Cytoplasmic. The chain crosses the membrane as a helical span at residues 146-166 (GVVLSILMIACNYANVQIIFW). Topologically, residues 167–191 (GDPLTEYVPTCGQFPSKSVNRFQTF) are extracellular. The chain crosses the membrane as a helical span at residues 192–212 (LAIALYMSIAHMVINVIILYI). Residues 213–239 (NVLQDRQQSKSFNVNQRYQSREALKSS) are Cytoplasmic-facing. A helical membrane pass occupies residues 240 to 260 (QAIFFLSMSQFFACLIYSVFT). The Extracellular segment spans residues 261 to 277 (KVFLEFQLNLSPLQSGL). Residues 278-298 (VLALSYTTPYACIAIPSLIIF) traverse the membrane as a helical segment. The Cytoplasmic portion of the chain corresponds to 299–334 (TFRFIKNQRLRNINELRSQTETGDECMRKIAKIWEK).

It belongs to the nematode receptor-like protein sra family. In terms of tissue distribution, expressed in interneurons AIY and AVB in L1 larvae. In adults, strong expression is seen in AIY and AIA but only weak expression in AVB.

The protein localises to the membrane. A G protein-coupled receptor required for olfactory imprinting a requisite in ordorant response such as benzaldehyde and isoamylalcohol. This chain is Serpentine receptor class alpha-11 (sra-11), found in Caenorhabditis elegans.